Reading from the N-terminus, the 342-residue chain is Replication factor C subunit 3 (342 aa).

63 to 70 contributes to the ATP binding site; that stretch reads GPPGTGKT.

The protein belongs to the activator 1 small subunits family. As to quaternary structure, heteropentamer of subunits rfc1, rfc2, rfc3, rfc4 and rfc5 that forms a complex (RFC) with PCNA in the presence of ATP. Two other complexes exist where rfc1 can be replaced by either ctf18 or elg1 to form the ctf18-RFC or the elg1-RFC complexes respectively.

It localises to the nucleus. The elongation of primed DNA templates by DNA polymerase delta and epsilon requires the action of the accessory proteins PCNA and activator 1. Subunit 3 binds ATP. Also involved in replication and DNA damage checkpoint controls, probably functioning as a checkpoint sensor. The protein is Replication factor C subunit 3 (rfc3) of Schizosaccharomyces pombe (strain 972 / ATCC 24843) (Fission yeast).